A 37-amino-acid polypeptide reads, in one-letter code: Large ribosomal subunit protein bL36 (37 aa).

This sequence belongs to the bacterial ribosomal protein bL36 family.

In Psychromonas ingrahamii (strain DSM 17664 / CCUG 51855 / 37), this protein is Large ribosomal subunit protein bL36.